The following is a 232-amino-acid chain: Probable thiopurine S-methyltransferase (232 aa).

S-adenosyl-L-methionine is bound by residues 14 to 25, Leu54, Glu75, and Arg137; that span reads WENRWQEGRTGF. Phe25 lines the substrate pocket.

It belongs to the class I-like SAM-binding methyltransferase superfamily. TPMT family.

The protein localises to the cytoplasm. The enzyme catalyses S-adenosyl-L-methionine + a thiopurine = S-adenosyl-L-homocysteine + a thiopurine S-methylether.. This Danio rerio (Zebrafish) protein is Probable thiopurine S-methyltransferase (tpmt).